Reading from the N-terminus, the 483-residue chain is Cobyric acid synthase (483 aa).

A GATase cobBQ-type domain is found at 251–438; the sequence is ALIVAVPMLP…LHGVFSADRF (188 aa). Residue Cys-333 is the Nucleophile of the active site. The active site involves His-430.

It belongs to the CobB/CobQ family. CobQ subfamily.

It participates in cofactor biosynthesis; adenosylcobalamin biosynthesis. Catalyzes amidations at positions B, D, E, and G on adenosylcobyrinic A,C-diamide. NH(2) groups are provided by glutamine, and one molecule of ATP is hydrogenolyzed for each amidation. The polypeptide is Cobyric acid synthase (Brucella melitensis biotype 2 (strain ATCC 23457)).